A 1161-amino-acid polypeptide reads, in one-letter code: BMP-2-inducible protein kinase (1161 aa).

The interval 1-20 (MKKFSRMPKSEGGSGGGAAG) is disordered. Residue S14 is modified to Phosphoserine. Residues 51–316 (VTLEESLAEG…DIFQVSYFAF (266 aa)) form the Protein kinase domain. ATP contacts are provided by residues 57–65 (LAEGGFSTV) and K79. D180 acts as the Proton acceptor in catalysis. Disordered regions lie at residues 358–439 (TDTI…RVLQ), 453–495 (LQHR…HHHL), 610–630 (TNQKNISNPPDMSGWNPFGED), and 655–832 (ERAS…TQDL). Residues 361 to 394 (IGPTETSIAPRQRPKANSATTATPSVLTIQSSAT) are compositionally biased toward polar residues. Low complexity-rich tracts occupy residues 422–439 (LLGQGPPQQPPQQHRVLQ) and 460–485 (QQQQQQQQQQQQQQQQQQQQQQQQQQ). A compositionally biased stretch (polar residues) spans 610–619 (TNQKNISNPP). At S689 the chain carries Phosphoserine. 2 stretches are compositionally biased toward polar residues: residues 697 to 718 (SSINQENGTANPIKNGKTSPAS) and 726 to 735 (KTSVQGQVQK). At S742 the chain carries Phosphoserine. Over residues 755–779 (EEEEQDDEEVLQGEQGDFNDDDTEP) the composition is skewed to acidic residues. The segment covering 798–813 (EKHSSDSDYEQAKAKY) has biased composition (basic and acidic residues). A phosphoserine mark is found at S817 and S818. T834 is modified (phosphothreonine). Residue S928 is modified to Phosphoserine. A disordered region spans residues 965–1035 (SQQQKVKQRS…RRDSQSSNEF (71 aa)). Basic residues predominate over residues 970-984 (VKQRSLQKLSSRQRR). Over residues 1000 to 1011 (TPTSTKKTLKPT) the composition is skewed to low complexity. S1029, S1031, S1032, S1039, S1041, S1076, S1107, and S1111 each carry phosphoserine. The span at 1137 to 1146 (TPHQSQQSQP) shows a compositional bias: polar residues. A disordered region spans residues 1137-1161 (TPHQSQQSQPVELDPFGAAPFPSKQ).

This sequence belongs to the protein kinase superfamily. Ser/Thr protein kinase family. Post-translationally, autophosphorylated.

Its subcellular location is the nucleus. It carries out the reaction L-seryl-[protein] + ATP = O-phospho-L-seryl-[protein] + ADP + H(+). The catalysed reaction is L-threonyl-[protein] + ATP = O-phospho-L-threonyl-[protein] + ADP + H(+). May be involved in osteoblast differentiation. The protein is BMP-2-inducible protein kinase (BMP2K) of Homo sapiens (Human).